The following is a 4885-amino-acid chain: Centrosome-associated protein CEP530 (4885 aa).

Residues 1437 to 1528 adopt a coiled-coil conformation; sequence VAEYEAETRG…GREKDQLRSE (92 aa).

It is found in the cytoplasm. Its subcellular location is the cytoskeleton. It localises to the microtubule organizing center. The protein localises to the centrosome. Its function is as follows. Required for proper nuclei segregation during the cell division. Plays a role in coordination of karyokinesis and cytokinesis during the tachyzoite cell cycle. This is Centrosome-associated protein CEP530 from Toxoplasma gondii (strain ATCC 50611 / Me49).